A 340-amino-acid polypeptide reads, in one-letter code: MVEQIKDKLGRPIRDLRLSVTDRCNFRCDYCMPKEVFGDDFVFLPKNELLTFDEMARIAKVYAELGVKKIRITGGEPLMRRDLDVLIAKLNQIDGIEDIGLTTNGLLLKKHGQKLYDAGLRRINVSLDAIDDTLFQSINNRNIKATTILEQIDYATSIGLNVKVNVVIQKGINDDQIIPMLEYFKDKHIEIRFIEFMDVGNDNGWDFSKVVTKDEMLTMIEQHFEIDPVEPKYFGEVAKYYRHKDNGVQFGLITSVSQSFCSTCTRARLSSDGKFYGCLFATVDGFNVKAFIRSGVTDEELKEQFKALWQIRDDRYSDERTAQTVANRQRKKINMNYIGG.

One can recognise a Radical SAM core domain in the interval 8 to 227; it reads KLGRPIRDLR…TMIEQHFEID (220 aa). Arginine 17 contributes to the GTP binding site. 2 residues coordinate [4Fe-4S] cluster: cysteine 24 and cysteine 28. Tyrosine 30 contacts S-adenosyl-L-methionine. Residue cysteine 31 participates in [4Fe-4S] cluster binding. Arginine 71 serves as a coordination point for GTP. Glycine 75 provides a ligand contact to S-adenosyl-L-methionine. Residue threonine 102 participates in GTP binding. Position 126 (serine 126) interacts with S-adenosyl-L-methionine. Residue lysine 163 coordinates GTP. An S-adenosyl-L-methionine-binding site is contributed by methionine 197. The [4Fe-4S] cluster site is built by cysteine 261 and cysteine 264. Position 266–268 (266–268) interacts with GTP; that stretch reads RAR. Cysteine 278 serves as a coordination point for [4Fe-4S] cluster.

This sequence belongs to the radical SAM superfamily. MoaA family. In terms of assembly, monomer and homodimer. [4Fe-4S] cluster serves as cofactor.

It catalyses the reaction GTP + AH2 + S-adenosyl-L-methionine = (8S)-3',8-cyclo-7,8-dihydroguanosine 5'-triphosphate + 5'-deoxyadenosine + L-methionine + A + H(+). It functions in the pathway cofactor biosynthesis; molybdopterin biosynthesis. Its function is as follows. Catalyzes the cyclization of GTP to (8S)-3',8-cyclo-7,8-dihydroguanosine 5'-triphosphate. The chain is GTP 3',8-cyclase from Staphylococcus aureus (strain USA300).